The sequence spans 467 residues: Cytochrome P450 monooxygenase azaI (467 aa).

The N-terminal stretch at 1–28 is a signal peptide; that stretch reads MESLAQLPGIFLPLAGCVLALSLSALLA. Cys411 is a binding site for heme.

It belongs to the cytochrome P450 family. The cofactor is heme.

It participates in secondary metabolite biosynthesis. In terms of biological role, cytochrome P450 monooxygenase; part of the gene cluster that mediates the biosynthesis of azaphilones, a class of fungal metabolites characterized by a highly oxygenated pyrano-quinone bicyclic core and exhibiting a broad range of bioactivities. In the first step, the non-reducing polyketide synthase azaA forms the hexaketide precursor from successive condensations of five malonyl-CoA units, presumably with a simple acetyl-CoA starter unit. The reactive polyketide chain then undergoes a PT-mediated C2-C7 cyclization to afford the aromatic ring and is eventually released as an aldehyde through the R-domain. The putative ketoreductase azaE is proposed to catalyze the reduction of the terminal ketone resulting in the early culture product FK17-P2a. The monooxygenase azaH was demonstrated to be the only enzyme required to convert FK17-P2a to azanigerone E. AzaH first hydroxylates the benzaldehyde intermediate FK17-P2a at C4, which triggers the formation of the pyran-ring to afford azanigerone E. In parallel, the 2,4-dimethylhexanoyl chain is synthesized by the HR-PKS azaB and is proposed to be transferred to the C4-hydroxyl of azanigerone E by the acyltransferase azaD directly from the ACP domain of azaB. Alternatively, the 2,4-dimethyl-hexanoyl chain may be offloaded from the HR-PKS as a carboxylic acid and converted to an acyl-CoA by azaF. The resulting acyl-CoA molecule could then be taken up as a substrate by AzaD to form azanigerone B. To yield the carboxylic acid substituent in azanigerone A, the hydroxypropyl side chain of azanigerone B would need to undergo a C-C oxidative cleavage catalyzed by cytochrome P450 AzaI. AzaI is proposed to act on a vicinal diol that leads to a C-C bond scission either through an alkoxyradical intermediate or a peroxy complex. In the biosynthesis of azanigerone A, azanigerone B first undergoes hydroxylation at C10, possibly catalyzed by one of the two FAD-dependent monooxygenases encoded in the cluster, azaG or azaL, resulting in the vicinal diol azanigerone C. Oxidative cleavage of azanigerone C by azaI would yield the corresponding aldehyde derivative of azanigerone A. Finally, the dehydrogenase azaJ is proposed to convert the aldehyde functional group into the carboxylic acid, completing the conversion from azanigerone B to azanigerone A. Alternatively, the oxidation of aldehyde to carboxylic acid may be catalyzed by the same P450 enzyme azaI via consecutive oxidation or by endogenous alcohol dehydrogenase. The protein is Cytochrome P450 monooxygenase azaI of Aspergillus niger (strain ATCC 1015 / CBS 113.46 / FGSC A1144 / LSHB Ac4 / NCTC 3858a / NRRL 328 / USDA 3528.7).